Reading from the N-terminus, the 320-residue chain is Prophage side tail fiber protein homolog StfQ (320 aa).

Disordered stretches follow at residues 147–213 and 241–270; these read SGRA…HKSS and TTSG…TAAS. Polar residues-rich tracts occupy residues 172–206 and 241–258; these read DLGT…NSAG and TTSG…SSDG. Positions 261–270 are enriched in low complexity; it reads THSLSGTAAS.

Belongs to the tail fiber family.

The chain is Prophage side tail fiber protein homolog StfQ (stfQ) from Escherichia coli (strain K12).